We begin with the raw amino-acid sequence, 156 residues long: Endoribonuclease YbeY (156 aa).

Positions 117, 121, and 127 each coordinate Zn(2+).

The protein belongs to the endoribonuclease YbeY family. Zn(2+) is required as a cofactor.

The protein localises to the cytoplasm. Single strand-specific metallo-endoribonuclease involved in late-stage 70S ribosome quality control and in maturation of the 3' terminus of the 16S rRNA. In Shewanella frigidimarina (strain NCIMB 400), this protein is Endoribonuclease YbeY.